The primary structure comprises 306 residues: Pantothenate kinase (306 aa).

91–98 (GSVAVGKS) contacts ATP.

It belongs to the prokaryotic pantothenate kinase family.

It localises to the cytoplasm. It carries out the reaction (R)-pantothenate + ATP = (R)-4'-phosphopantothenate + ADP + H(+). The protein operates within cofactor biosynthesis; coenzyme A biosynthesis; CoA from (R)-pantothenate: step 1/5. The polypeptide is Pantothenate kinase (Streptococcus pyogenes serotype M12 (strain MGAS2096)).